A 474-amino-acid chain; its full sequence is Phenylalanine--tRNA ligase alpha subunit (474 aa).

L-phenylalanine contacts are provided by residues Thr317, 356 to 358 (QLE), and Tyr396. Glu398 provides a ligand contact to Mg(2+). Phe421 contributes to the L-phenylalanine binding site.

It belongs to the class-II aminoacyl-tRNA synthetase family. Phe-tRNA synthetase alpha subunit type 2 subfamily. Tetramer of two alpha and two beta subunits. Requires Mg(2+) as cofactor.

Its subcellular location is the cytoplasm. It carries out the reaction tRNA(Phe) + L-phenylalanine + ATP = L-phenylalanyl-tRNA(Phe) + AMP + diphosphate + H(+). The polypeptide is Phenylalanine--tRNA ligase alpha subunit (Methanocorpusculum labreanum (strain ATCC 43576 / DSM 4855 / Z)).